The chain runs to 468 residues: Citrate synthase, mitochondrial (468 aa).

Residues 1–30 constitute a mitochondrion transit peptide; that stretch reads MSLITAGRLCARILGAKNSPCALIAARQAS. Catalysis depends on residues histidine 303 and histidine 349. Arginine 358 serves as a coordination point for oxaloacetate. Residue aspartate 404 is part of the active site. Oxaloacetate-binding residues include arginine 430 and arginine 450.

This sequence belongs to the citrate synthase family. In terms of assembly, homodimer.

It localises to the mitochondrion matrix. It carries out the reaction oxaloacetate + acetyl-CoA + H2O = citrate + CoA + H(+). Its pathway is carbohydrate metabolism; tricarboxylic acid cycle; isocitrate from oxaloacetate: step 1/2. Functionally, key enzyme of the Krebs tricarboxylic acid cycle which catalyzes the synthesis of citrate from acetyl coenzyme A and oxaloacetate. This Xenopus tropicalis (Western clawed frog) protein is Citrate synthase, mitochondrial (cs).